A 325-amino-acid polypeptide reads, in one-letter code: Fatty acid synthase alpha subunit hexA (325 aa).

D209 lines the Mg(2+) pocket. Acetyl-CoA-binding positions include 209-211 (DLV), 255-265 (EAVFKCLHTQT), 279-282 (KSDN), and 301-303 (ISH). S302 provides a ligand contact to Mg(2+).

Belongs to the thiolase-like superfamily. Fungal fatty acid synthetase subunit alpha family. [Alpha(6)beta(6)] hexamers of two multifunctional subunits (alpha and beta). Post-translationally, 4'-phosphopantetheine is transferred from CoA to a specific serine of the acyl carrier domain by the C-terminal PPT domain. This modification is essential for activity because fatty acids are bound in thioester linkage to the sulfhydryl of the prosthetic group.

The enzyme catalyses acetyl-CoA + n malonyl-CoA + 2n NADPH + 4n H(+) = a long-chain-acyl-CoA + n CoA + n CO2 + 2n NADP(+).. It carries out the reaction a fatty acyl-[ACP] + malonyl-[ACP] + H(+) = a 3-oxoacyl-[ACP] + holo-[ACP] + CO2. It catalyses the reaction a (3R)-hydroxyacyl-[ACP] + NADP(+) = a 3-oxoacyl-[ACP] + NADPH + H(+). It participates in mycotoxin biosynthesis. In terms of biological role, fatty acid synthase alpha subunit; part of the fragmented gene cluster that mediates the biosynthesis of dothistromin (DOTH), a polyketide toxin very similar in structure to the aflatoxin precursor, versicolorin B. The first step of the pathway is the conversion of acetate to norsolorinic acid (NOR) and requires the fatty acid synthase subunits hexA and hexB, as well as the polyketide synthase pksA. PksA combines a hexanoyl starter unit and 7 malonyl-CoA extender units to synthesize the precursor NOR. The hexanoyl starter unit is provided to the acyl-carrier protein (ACP) domain by the fungal fatty acid synthase hexA/hexB. The second step is the conversion of NOR to averantin (AVN) and requires the norsolorinic acid ketoreductase nor1, which catalyzes the dehydration of norsolorinic acid to form (1'S)-averantin. The cytochrome P450 monooxygenase avnA then catalyzes the hydroxylation of AVN to 5'hydroxyaverantin (HAVN). The next step is performed by adhA that transforms HAVN to averufin (AVF). Averufin might then be converted to hydroxyversicolorone by cypX and avfA. Hydroxyversicolorone is further converted versiconal hemiacetal acetate (VHA) by moxY. VHA is then the substrate for the versiconal hemiacetal acetate esterase est1 to yield versiconal (VAL). Versicolorin B synthase vbsA then converts VAL to versicolorin B (VERB) by closing the bisfuran ring. Then, the activity of the versicolorin B desaturase verB leads to versicolorin A (VERA). DotB, a predicted chloroperoxidase, may perform epoxidation of the A-ring of VERA. Alternatively, a cytochrome P450, such as cypX or avnA could catalyze this step. It is also possible that another, uncharacterized, cytochrome P450 enzyme is responsible for this step. Opening of the epoxide could potentially be achieved by the epoxide hydrolase epoA. However, epoA seems not to be required for DOTH biosynthesis, but other epoxide hydrolases may have the ability to complement this hydrolysis. Alternatively, opening of the epoxide ring could be achieved non-enzymatically. The next step is the deoxygenation of ring A to yield the 5,8-dihydroxyanthraquinone which is most likely catalyzed by the NADPH dehydrogenase encoded by ver1. The last stages of DOTH biosynthesis are proposed to involve hydroxylation of the bisfuran. OrdB and norB might have oxidative roles here. An alternative possibility is that cytochrome P450 monoogenases such as avnA and cypX might perform these steps in addition to previously proposed steps. This Dothistroma septosporum (Red band needle blight fungus) protein is Fatty acid synthase alpha subunit hexA.